The sequence spans 444 residues: Tubulin beta 8B (444 aa).

The short motif at 1–4 is the MREI motif element; it reads MREI. 6 residues coordinate GTP: glutamine 11, glutamate 69, serine 138, glycine 142, threonine 143, and glycine 144. A Mg(2+)-binding site is contributed by glutamate 69. Serine 172 is modified (phosphoserine; by CDK1). GTP is bound by residues asparagine 204 and asparagine 226. A disordered region spans residues 421–444; the sequence is EYQQYQDATAEEEEDEEYAEEEVA. The segment covering 429–444 has biased composition (acidic residues); sequence TAEEEEDEEYAEEEVA. The residue at position 436 (glutamate 436) is a 5-glutamyl polyglutamate.

It belongs to the tubulin family. As to quaternary structure, dimer of alpha and beta chains. A typical microtubule is a hollow water-filled tube with an outer diameter of 25 nm and an inner diameter of 15 nM. Alpha-beta heterodimers associate head-to-tail to form protofilaments running lengthwise along the microtubule wall with the beta-tubulin subunit facing the microtubule plus end conferring a structural polarity. Microtubules usually have 13 protofilaments but different protofilament numbers can be found in some organisms and specialized cells. Mg(2+) serves as cofactor. Some glutamate residues at the C-terminus are polyglutamylated, resulting in polyglutamate chains on the gamma-carboxyl group. Polyglutamylation plays a key role in microtubule severing by spastin (SPAST). SPAST preferentially recognizes and acts on microtubules decorated with short polyglutamate tails: severing activity by SPAST increases as the number of glutamates per tubulin rises from one to eight, but decreases beyond this glutamylation threshold. Glutamylation is also involved in cilia motility. In terms of processing, some glutamate residues at the C-terminus are monoglycylated but not polyglycylated due to the absence of functional TTLL10 in human. Monoglycylation is mainly limited to tubulin incorporated into cilia and flagella axonemes, which is required for their stability and maintenance. Flagella glycylation controls sperm motility. Both polyglutamylation and monoglycylation can coexist on the same protein on adjacent residues, and lowering glycylation levels increases polyglutamylation, and reciprocally. Post-translationally, phosphorylated on Ser-172 by CDK1 during the cell cycle, from metaphase to telophase, but not in interphase. This phosphorylation inhibits tubulin incorporation into microtubules.

Its subcellular location is the cytoplasm. The protein resides in the cytoskeleton. Its function is as follows. Tubulin is the major constituent of microtubules, a cylinder consisting of laterally associated linear protofilaments composed of alpha- and beta-tubulin heterodimers. Microtubules grow by the addition of GTP-tubulin dimers to the microtubule end, where a stabilizing cap forms. Below the cap, tubulin dimers are in GDP-bound state, owing to GTPase activity of alpha-tubulin. This Homo sapiens (Human) protein is Tubulin beta 8B.